A 320-amino-acid polypeptide reads, in one-letter code: Ferrochelatase (320 aa).

Residues His194 and Glu275 each coordinate Fe cation.

Belongs to the ferrochelatase family.

The protein localises to the cytoplasm. It catalyses the reaction heme b + 2 H(+) = protoporphyrin IX + Fe(2+). It functions in the pathway porphyrin-containing compound metabolism; protoheme biosynthesis; protoheme from protoporphyrin-IX: step 1/1. Its function is as follows. Catalyzes the ferrous insertion into protoporphyrin IX. The sequence is that of Ferrochelatase from Pectobacterium atrosepticum (strain SCRI 1043 / ATCC BAA-672) (Erwinia carotovora subsp. atroseptica).